A 366-amino-acid polypeptide reads, in one-letter code: MTPEHLPTEQYEAQLAEKVSRLQSMMAPFSDLVPEVFRSPVSHYRMRAEFRLWHDGDDLYHIMFDQQTKSRIRVDTFPAASQLINTLMKAMIAGVRDNHALRHKLFQIDYLTTLSNQAVVSLLYHKKLDEEWREAATALRDALRAQGLNVHLIGRATKTKIELDQDYIDERLPVAGKEMIYRQVENSFTQPNAAMNIQMLEWALEVTKDSKGDLLELYCGNGNFSLALARNFNRVLATEIAKPSVAAAQYNIAANHIDNVQIIRMAAEEFTQAMNGVREFNRLQGIDLKRYQCETIFVDPPRSGLDSETEKMVQAYPRILYISCNPETLCKNLETLSQTHTVSRLALFDQFPYTHHMECGVLLTAR.

Residues Q190, Y218, N223, E239, and D299 each coordinate S-adenosyl-L-methionine. The active-site Nucleophile is the C324. E358 acts as the Proton acceptor in catalysis.

Belongs to the class I-like SAM-binding methyltransferase superfamily. RNA M5U methyltransferase family. TrmA subfamily.

The catalysed reaction is uridine(54) in tRNA + S-adenosyl-L-methionine = 5-methyluridine(54) in tRNA + S-adenosyl-L-homocysteine + H(+). It catalyses the reaction uridine(341) in tmRNA + S-adenosyl-L-methionine = 5-methyluridine(341) in tmRNA + S-adenosyl-L-homocysteine + H(+). Dual-specificity methyltransferase that catalyzes the formation of 5-methyluridine at position 54 (m5U54) in all tRNAs, and that of position 341 (m5U341) in tmRNA (transfer-mRNA). The protein is tRNA/tmRNA (uracil-C(5))-methyltransferase of Salmonella paratyphi B (strain ATCC BAA-1250 / SPB7).